A 220-amino-acid chain; its full sequence is MAYPGYGGAFGNFSGQIPGMQMQMGQPMPGAGPNMFSGGYPGYLGYSDSYSPADDSMWTYFTAVAGQDGEVDAEELQRCLTQSGISGTYAPFSLETCRIMIAMLDRDYTGKMGFNEFKELWAALNAWKQNFMTIDQDQSGTVEHHELSQAIALMGYRLSPQTLAAIVRRYSKNGRIFFDDYVACCVKLRALTDFFRRRDHLQQGIVNFMYEDFLQGTMTI.

4 consecutive EF-hand domains span residues 51–86, 92–127, 122–157, and 158–193; these read SPAD…SGIS, FSLE…LNAW, AALN…MGYR, and LSPQ…ALTD. Positions 105, 107, 109, 111, 116, 135, 137, 139, 141, and 146 each coordinate Ca(2+).

In terms of assembly, homodimer. Interacts with SRI and LCP1.

The protein localises to the cytoplasm. The protein resides in the cytoplasmic granule membrane. Calcium-binding protein that may play a role in the adhesion of neutrophils to fibronectin. May play a role in the formation of focal adhesions. The sequence is that of Grancalcin (Gca) from Mus musculus (Mouse).